Consider the following 223-residue polypeptide: Adenylate kinase (223 aa).

10–15 lines the ATP pocket; sequence GSGKGT. Residues 30 to 59 form an NMP region; it reads ESGAIFRQHIGGGTELGKKAKEYIDRGDLV. Residues serine 31, arginine 36, 57–59, 84–87, and glutamine 91 contribute to the AMP site; these read DLV and GFPR. An LID region spans residues 125-164; that stretch reads GRRLCKNDNNHPNNIFIDAIKPDGDVCRVCGGSLSARADD. Arginine 126 contributes to the ATP binding site. The AMP site is built by arginine 161 and arginine 173. Glycine 209 contacts ATP.

Belongs to the adenylate kinase family. Monomer.

It is found in the cytoplasm. It carries out the reaction AMP + ATP = 2 ADP. It participates in purine metabolism; AMP biosynthesis via salvage pathway; AMP from ADP: step 1/1. Functionally, catalyzes the reversible transfer of the terminal phosphate group between ATP and AMP. Plays an important role in cellular energy homeostasis and in adenine nucleotide metabolism. The chain is Adenylate kinase from Nitratidesulfovibrio vulgaris (strain DSM 19637 / Miyazaki F) (Desulfovibrio vulgaris).